We begin with the raw amino-acid sequence, 679 residues long: MATLITSTTAATAASGPLVDYLWMLILGFIIAFVLAFSVGANDVANSFGTAVGSGVVTLKQACILASIFETVGSVLLGAKVSETIRKGLIDVEMYNSTQGLLMAGSVSAMFGSAVWQLVASFLKLPISGTHCIVGATIGFSLVAKGQEGVKWSELIKIVMSWFVSPLLSGIMSGILFFLVRAFILHKADPVPNGLRALPVFYACTVGINLFSIMYTGAPLLGFDKLPLWGTILISVGCAVFCALIVWFFVCPRMKRKIEREIKCSPSESPLMEKKNSLKEDHEETKLSVGDIENKHPVSEVGPATVPLQAVVEERTVSFKLGDLEEAPERERLPSVDLKEETSIDSTVNGAVQLPNGNLVQFSQAVSNQINSSGHYQYHTVHKDSGLYKELLHKLHLAKVGDCMGDSGDKPLRRNNSYTSYTMAICGMPLDSFRAKEGEQKGEEMEKLTWPNADSKKRIRMDSYTSYCNAVSDLHSASEIDMSVKAEMGLGDRKGSNGSLEEWYDQDKPEVSLLFQFLQILTACFGSFAHGGNDVSNAIGPLVALYLVYDTGDVSSKVATPIWLLLYGGVGICVGLWVWGRRVIQTMGKDLTPITPSSGFSIELASALTVVIASNIGLPISTTHCKVGSVVSVGWLRSKKAVDWRLFRNIFMAWFVTVPISGVISAAIMAIFRYVILRM.

Helical transmembrane passes span 21 to 41 (YLWM…SVGA), 62 to 82 (ACIL…AKVS), 100 to 120 (GLLM…QLVA), 158 to 178 (IVMS…ILFF), 203 to 223 (ACTV…LLGF), and 230 to 250 (GTIL…WFFV). Phosphoserine is present on residues serine 265 and serine 269. Transmembrane regions (helical) follow at residues 511 to 531 (VSLL…FAHG), 558 to 578 (VATP…GLWV), 600 to 620 (FSIE…GLPI), and 650 to 670 (IFMA…AIMA). The tract at residues 550–558 (DTGDVSSKV) is a.

Belongs to the inorganic phosphate transporter (PiT) (TC 2.A.20) family. In terms of tissue distribution, ubiquitously expressed.

It is found in the cell membrane. It catalyses the reaction 2 Na(+)(out) + phosphate(out) = 2 Na(+)(in) + phosphate(in). Sodium-phosphate symporter which preferentially transports the monovalent form of phosphate with a stoichiometry of two sodium ions per phosphate ion. May play a role in extracellular matrix and cartilage calcification as well as in vascular calcification. Essential for cell proliferation but this function is independent of its phosphate transporter activity. In terms of biological role, (Microbial infection) May function as a retroviral receptor as it confers human cells susceptibility to infection to Gibbon Ape Leukemia Virus (GaLV), Simian sarcoma-associated virus (SSAV) and Feline leukemia virus subgroup B (FeLV-B) as well as 10A1 murine leukemia virus (10A1 MLV). This Homo sapiens (Human) protein is Sodium-dependent phosphate transporter 1 (SLC20A1).